The chain runs to 134 residues: Cytochrome c-550 (134 aa).

The residue at position 1 (Q1) is a Pyrrolidone carboxylic acid. Heme c contacts are provided by C15, C18, H19, and M100.

Post-translationally, binds 1 heme c group covalently per subunit.

In terms of biological role, electron donor for nitrous-oxide reductase. The protein is Cytochrome c-550 of Paracoccus pantotrophus (Thiosphaera pantotropha).